Consider the following 103-residue polypeptide: Flagellar hook-basal body complex protein FliE (103 aa).

The protein belongs to the FliE family.

It localises to the bacterial flagellum basal body. The polypeptide is Flagellar hook-basal body complex protein FliE (Yersinia pestis).